The primary structure comprises 104 residues: L-rhamnose mutarotase (104 aa).

Residue Y18 participates in substrate binding. H22 (proton donor) is an active-site residue. Substrate is bound by residues Y41 and W76–W77.

It belongs to the rhamnose mutarotase family. Homodimer.

It localises to the cytoplasm. It carries out the reaction alpha-L-rhamnose = beta-L-rhamnose. Its pathway is carbohydrate metabolism; L-rhamnose metabolism. Functionally, involved in the anomeric conversion of L-rhamnose. The chain is L-rhamnose mutarotase from Shigella sonnei (strain Ss046).